The sequence spans 366 residues: MSHNTFGHLFRVTTFGESHGVALGCVVDGCPPGLALEAEEIQAELDRRKPGQSRFTTQRREPDQVKILSGVFGDDRTGGRQLTTGTPIALMIENTDQRSKDYSEIRDSYRPGHADYTYDAKYGFRDYRGGGRSSARETAARVAAGAIARKVIPGITIRAALVQMGPHAIDRANWDWAEVGNNPFFCPDAKAAALYESYLDGIRKDGSSVGAVIEVIAEGVPPGLGAPIYGKLDADLAAAMMSINAVKGVEIGDGFAAAALRGEDNADEMRAGNDGRPRFLGNHAGGILGGISSGEPIVVRFAVKPTSSILTPRQSVNRQGEEIDLVTKGRHDPCVGIRAVPVAEAMMACVLADHHLRHRGQVGDRV.

Residues R48 and R54 each contribute to the NADP(+) site. FMN contacts are provided by residues 132–134 (RSS), 244–245 (NA), G289, 304–308 (KPTSS), and R330.

The protein belongs to the chorismate synthase family. As to quaternary structure, homotetramer. FMNH2 is required as a cofactor.

It catalyses the reaction 5-O-(1-carboxyvinyl)-3-phosphoshikimate = chorismate + phosphate. Its pathway is metabolic intermediate biosynthesis; chorismate biosynthesis; chorismate from D-erythrose 4-phosphate and phosphoenolpyruvate: step 7/7. In terms of biological role, catalyzes the anti-1,4-elimination of the C-3 phosphate and the C-6 proR hydrogen from 5-enolpyruvylshikimate-3-phosphate (EPSP) to yield chorismate, which is the branch point compound that serves as the starting substrate for the three terminal pathways of aromatic amino acid biosynthesis. This reaction introduces a second double bond into the aromatic ring system. The polypeptide is Chorismate synthase (Methylorubrum populi (strain ATCC BAA-705 / NCIMB 13946 / BJ001) (Methylobacterium populi)).